The primary structure comprises 127 residues: Fluoride-specific ion channel FluC (127 aa).

The next 4 membrane-spanning stretches (helical) occupy residues 4-24 (IIYI…TQIA), 34-54 (FPFP…IGFF), 65-85 (FELR…FSTL), and 97-117 (FYGI…LAVL). The Na(+) site is built by Gly77 and Thr80.

It belongs to the fluoride channel Fluc/FEX (TC 1.A.43) family.

The protein localises to the cell inner membrane. It carries out the reaction fluoride(in) = fluoride(out). Na(+) is not transported, but it plays an essential structural role and its presence is essential for fluoride channel function. Its function is as follows. Fluoride-specific ion channel. Important for reducing fluoride concentration in the cell, thus reducing its toxicity. In Bacteroides fragilis (strain ATCC 25285 / DSM 2151 / CCUG 4856 / JCM 11019 / LMG 10263 / NCTC 9343 / Onslow / VPI 2553 / EN-2), this protein is Fluoride-specific ion channel FluC.